Here is a 439-residue protein sequence, read N- to C-terminus: Hydrogenobyrinate a,c-diamide synthase (439 aa).

Positions 247–439 constitute a GATase cobBQ-type domain; sequence RIALAEDGAF…FFHAIARASA (193 aa). C329 functions as the Nucleophile in the catalytic mechanism.

This sequence belongs to the CobB/CbiA family. Requires Mg(2+) as cofactor.

The catalysed reaction is hydrogenobyrinate + 2 L-glutamine + 2 ATP + 2 H2O = hydrogenobyrinate a,c-diamide + 2 L-glutamate + 2 ADP + 2 phosphate + 2 H(+). It functions in the pathway cofactor biosynthesis; adenosylcobalamin biosynthesis; cob(II)yrinate a,c-diamide from precorrin-2 (aerobic route): step 9/10. In terms of biological role, catalyzes the ATP-dependent amidation of the two carboxylate groups at positions a and c of hydrogenobyrinate, using either L-glutamine or ammonia as the nitrogen source. This chain is Hydrogenobyrinate a,c-diamide synthase, found in Mesorhizobium japonicum (strain LMG 29417 / CECT 9101 / MAFF 303099) (Mesorhizobium loti (strain MAFF 303099)).